Reading from the N-terminus, the 81-residue chain is Mipartoxin-2 (81 aa).

Residues 1–21 (MKTLLLTLVVVTIVCLDLGNS) form the signal peptide. Intrachain disulfides connect Cys-24–Cys-42, Cys-35–Cys-61, Cys-65–Cys-73, and Cys-74–Cys-79.

Belongs to the three-finger toxin family. Short-chain subfamily. As to expression, expressed by the venom gland.

The protein resides in the secreted. Functionally, snake venom neurotoxin that blocks neuromuscular transmission, presenting a postsynaptic action through the nicotinic acetylcholine receptor (nAChR). Has no cytotoxic activity. The polypeptide is Mipartoxin-2 (Micrurus mipartitus (Red-tailed coral snake)).